A 314-amino-acid chain; its full sequence is 2-oxo-3-(phosphooxy)propyl 3-oxoalkanoate synthase (314 aa).

This sequence belongs to the AfsA family.

It carries out the reaction a medium-chain 3-oxoacyl-[ACP] + dihydroxyacetone phosphate = a (4-alkanoyl-5-oxo-2,5-dihydrofuran-3-yl)methyl phosphate + holo-[ACP] + H2O. Involved of the biosynthesis of S.coelicolor butanolide 1 (SCB1), a gamma-butyrolactone that triggers antibiotic production. In Streptomyces coelicolor (strain ATCC BAA-471 / A3(2) / M145), this protein is 2-oxo-3-(phosphooxy)propyl 3-oxoalkanoate synthase.